Consider the following 701-residue polypeptide: MTEHGIKWACEYCTYENWPSAIKCTMCRAPRPSGAIITEEPFKNSTPDVGSMERESGSPLICPDSSARPRVKSSYSMETSTKWSCHMCTYLNWPRAIRCTQCLSQRRTRSPTESPQSSGSSLRAIPSPIDPCEEYNDRNKLNIKGQHWTCSACTYENCAKAKKCVVCDHPTPNNMDAIELANTDEASSIINEQDRARWRGGCSSSNSQRRSPPTSKRDSDMDFQRIELAGAVGSKEEFELDLKKLKQIKNRMRKTDWLFLNACVGVVEGDLSAVEAYKTSGGDIARQLSADEVRLLNRPSAFDVGYTLVHLSIRFQRQDMLAILLTEFSQHAAKCIPAMVCPELTEQIRREIAASVHQRKGDFACYFLTDLVTFTLPADIEDLPPTVQEKLFDEVLDRDVQKELEEESPIINWSLELGTRLDSRLYALWNRTAGDCLLDSVLQATWGIYDKDSVLRKALHDSLHDCSHWFYSRWKEWESWYSQSFGLHFSLREEQWQEDWAFILSLASQPGASLEQTHIFVLAHILRRPIIVYGVKYYKSFRGETLGYTRFQGVYLPLLWEQSFCWKSPIALGYTRGHFSALVAMENDGFDNRGAGANLNTDDDVTVTFLPLVDSERKLLHIHFLSAQELGNEDQQEKLLREWMDCCVTEGGVLVAMQKSSRRRNHPLVTQMVEKWLDGYRQIRPCTALSDGEEDEDDEDE.

The segment at 3 to 33 adopts a RanBP2-type 1 zinc-finger fold; sequence EHGIKWACEYCTYENWPSAIKCTMCRAPRPS. Residues cysteine 10, cysteine 13, cysteine 24, and cysteine 27 each contribute to the Zn(2+) site. The disordered stretch occupies residues 38–59; sequence TEEPFKNSTPDVGSMERESGSP. The segment at 79–108 adopts a RanBP2-type 2 zinc-finger fold; sequence TSTKWSCHMCTYLNWPRAIRCTQCLSQRRT. 4 residues coordinate Zn(2+): cysteine 85, cysteine 88, cysteine 99, and cysteine 102. The segment at 108-129 is disordered; the sequence is TRSPTESPQSSGSSLRAIPSPI. The segment covering 111–121 has biased composition (low complexity); that stretch reads PTESPQSSGSS. The segment at 143-173 adopts a RanBP2-type 3 zinc-finger fold; the sequence is IKGQHWTCSACTYENCAKAKKCVVCDHPTPN. Zn(2+) contacts are provided by cysteine 150, cysteine 153, cysteine 164, and cysteine 167. The tract at residues 198-220 is disordered; it reads WRGGCSSSNSQRRSPPTSKRDSD. Positions 202-214 are enriched in polar residues; that stretch reads CSSSNSQRRSPPT. ANK repeat units lie at residues 253-283 and 306-333; these read RKTD…SGGD and YTLV…QHAA. Residues 425-585 form the OTU domain; it reads LYALWNRTAG…RGHFSALVAM (161 aa). Cysteine 436 acts as the Nucleophile in catalysis. The active-site Proton acceptor is the histidine 578.

Belongs to the peptidase C64 family.

It is found in the cytoplasm. The protein resides in the nucleus. The enzyme catalyses Thiol-dependent hydrolysis of ester, thioester, amide, peptide and isopeptide bonds formed by the C-terminal Gly of ubiquitin (a 76-residue protein attached to proteins as an intracellular targeting signal).. In terms of biological role, ubiquitin thioesterase, which specifically hydrolyzes 'Lys-29'-linked and 'Lys-33'-linked diubiquitin. Also cleaves 'Lys-63'-linked chains, but with 40-fold less efficiency compared to 'Lys-29'-linked ones. Positive regulator of the Wnt signaling pathway that deubiquitinates apc protein, a negative regulator of Wnt-mediated transcription. Acts as a regulator of autophagy by mediating deubiquitination of pik3c3/vps34, thereby promoting autophagosome maturation. Plays a role in the regulation of cell morphology and cytoskeletal organization. Required in the stress fiber dynamics and cell migration. The chain is Ubiquitin thioesterase zranb1 (zranb1) from Xenopus tropicalis (Western clawed frog).